We begin with the raw amino-acid sequence, 83 residues long: Tetracenomycin polyketide synthase acyl carrier protein (83 aa).

Residues 3-83 enclose the Carrier domain; sequence QIGLPRLVEI…VNTETAGEVA (81 aa). Position 41 is an O-(pantetheine 4'-phosphoryl)serine (Ser41).

As to quaternary structure, the tetracenomycin polyketide synthase (TCM PKS) is composed of a ketosynthase complex (TcmKL), an acyl carrier protein (TcmM), a cyclase (TcmN) and a probable second cyclase (TcmJ). Pantetheine 4'-phosphate serves as cofactor. Post-translationally, 4'-phosphopantetheine is transferred from CoA to a specific serine of apo-ACP.

It catalyses the reaction 10 malonyl-CoA + 8 H(+) = tetracenomycin F2 + 10 CO2 + 10 CoA + 2 H2O. It functions in the pathway antibiotic biosynthesis; tetracenomycin C biosynthesis. In terms of biological role, involved in the biosynthesis of tetracenomycin C (TCM C). Part of a type II polyketide synthase (PKS) that catalyzes the synthesis of tetracenomycin F2 (TCM F2), a precursor of TCM C, from malonyl-CoA. TcmM is an acyl carrier protein that serves as an acceptor of malonate from malonyl-CoA and acts as the tether for the substrates and intermediates of polyketide assembly. The malonyl CoA-acyl carrier protein transacylase FabD (MCT) is required to catalyze the transacylation between malonyl-CoA and TcmM, although a relatively slow spontaneous self-malonylation of TcmM also occurs in a reaction without the MCT. In Streptomyces glaucescens, this protein is Tetracenomycin polyketide synthase acyl carrier protein.